Reading from the N-terminus, the 151-residue chain is MQVILLEKVVNLGNLGEIVRVRDGYARNFLIPQKKARRATDAALKEFEARRAELEKIQAEKLAAAEALGGRLAGYQLKIVQKAGVDGRLFGSVTNADVAEGLKKAGFEAVEKAQVRLPNGPLKAVGEYPIQVALHADVTVDVTVVVEGDIA.

The protein belongs to the bacterial ribosomal protein bL9 family.

Functionally, binds to the 23S rRNA. In Bordetella petrii (strain ATCC BAA-461 / DSM 12804 / CCUG 43448), this protein is Large ribosomal subunit protein bL9.